The following is a 274-amino-acid chain: MNKEFIKSIVVSSPWEKVEIARHKDRPTGKYYIDNIFKDFIEFHGDRLFGDDKAIIGGIASFEDISVTVIAITKGANTNENIERNFGMPNPEGYRKALRLMKQAEKFNRPVICFIDTPGAFCGVGAEERGQGSAIANNLFELSRLKTPIISIVIGEGGSGGALALTVADKILMLENAVYSILSPEGFASILWKDSKRVKEAANVMKITAQDLNEFGIIDTVIKEPRGGAHKNPQKQVTLIKKEIMNAMNEMKNIETNQMINERYDKFRKIGTLE.

One can recognise a CoA carboxyltransferase C-terminal domain in the interval 2-250 (NKEFIKSIVV…KKEIMNAMNE (249 aa)).

Belongs to the AccA family. As to quaternary structure, acetyl-CoA carboxylase is a heterohexamer composed of biotin carboxyl carrier protein (AccB), biotin carboxylase (AccC) and two subunits each of ACCase subunit alpha (AccA) and ACCase subunit beta (AccD).

It is found in the cytoplasm. It catalyses the reaction N(6)-carboxybiotinyl-L-lysyl-[protein] + acetyl-CoA = N(6)-biotinyl-L-lysyl-[protein] + malonyl-CoA. It participates in lipid metabolism; malonyl-CoA biosynthesis; malonyl-CoA from acetyl-CoA: step 1/1. Functionally, component of the acetyl coenzyme A carboxylase (ACC) complex. First, biotin carboxylase catalyzes the carboxylation of biotin on its carrier protein (BCCP) and then the CO(2) group is transferred by the carboxyltransferase to acetyl-CoA to form malonyl-CoA. The polypeptide is Acetyl-coenzyme A carboxylase carboxyl transferase subunit alpha (Clostridium botulinum (strain Alaska E43 / Type E3)).